We begin with the raw amino-acid sequence, 171 residues long: RxLR effector protein CRE7 (171 aa).

A signal peptide spans 1–23 (MRAIAILLAVVATIFASLHGVSA). The RxLR-dEER signature appears at 46-59 (RRLRQTGDASDEER).

Belongs to the RxLR effector family.

The protein resides in the secreted. It is found in the host cell. Effector that is involved in host plant infection. Contributes to virulence during the early infection stage, by inhibiting plant defense responses induced by both PAMP-triggered immunity (PTI) and effector-triggered immunity (ETI). The chain is RxLR effector protein CRE7 from Phytophthora infestans (strain T30-4) (Potato late blight agent).